The primary structure comprises 262 residues: Glutamate racemase (262 aa).

Substrate-binding positions include Asp-10–Ser-11 and Phe-42–Gly-43. Cys-74 (proton donor/acceptor) is an active-site residue. Residue Asn-75–Thr-76 participates in substrate binding. The Proton donor/acceptor role is filled by Cys-189. Residue Thr-190–His-191 coordinates substrate.

The protein belongs to the aspartate/glutamate racemases family.

The enzyme catalyses L-glutamate = D-glutamate. It functions in the pathway cell wall biogenesis; peptidoglycan biosynthesis. Functionally, provides the (R)-glutamate required for cell wall biosynthesis. The polypeptide is Glutamate racemase (Mesorhizobium japonicum (strain LMG 29417 / CECT 9101 / MAFF 303099) (Mesorhizobium loti (strain MAFF 303099))).